We begin with the raw amino-acid sequence, 56 residues long: Large ribosomal subunit protein eL40 (56 aa).

This sequence belongs to the eukaryotic ribosomal protein eL40 family.

The polypeptide is Large ribosomal subunit protein eL40 (Saccharolobus islandicus (strain Y.N.15.51 / Yellowstone #2) (Sulfolobus islandicus)).